Here is a 412-residue protein sequence, read N- to C-terminus: Putative competence-damage inducible protein (412 aa).

It belongs to the CinA family.

This is Putative competence-damage inducible protein from Bacillus cereus (strain AH187).